A 346-amino-acid chain; its full sequence is Dihydroorotase (346 aa).

Positions 13 and 15 each coordinate Zn(2+). Residues 15–17 and N41 contribute to the substrate site; that span reads HLR. 3 residues coordinate Zn(2+): K99, H136, and H174. K99 bears the N6-carboxylysine mark. H136 is a substrate binding site. L219 contributes to the substrate binding site. D247 serves as a coordination point for Zn(2+). The active site involves D247. The substrate site is built by H251 and A263.

This sequence belongs to the metallo-dependent hydrolases superfamily. DHOase family. Class II DHOase subfamily. As to quaternary structure, homodimer. Zn(2+) serves as cofactor.

The catalysed reaction is (S)-dihydroorotate + H2O = N-carbamoyl-L-aspartate + H(+). It participates in pyrimidine metabolism; UMP biosynthesis via de novo pathway; (S)-dihydroorotate from bicarbonate: step 3/3. Catalyzes the reversible cyclization of carbamoyl aspartate to dihydroorotate. This Picosynechococcus sp. (strain ATCC 27264 / PCC 7002 / PR-6) (Agmenellum quadruplicatum) protein is Dihydroorotase.